An 85-amino-acid chain; its full sequence is Alpha-insect toxin Bot14 (85 aa).

The signal sequence occupies residues 1–18 (MSSLMISTAMKGKAPYRQ). The LCN-type CS-alpha/beta domain occupies 20–84 (RDGYIAQPHN…GIIVHGEKCH (65 aa)). 4 disulfide bridges follow: C30/C83, C34/C55, C41/C65, and C45/C67.

The protein belongs to the long (4 C-C) scorpion toxin superfamily. Sodium channel inhibitor family. Alpha subfamily. In terms of tissue distribution, expressed by the venom gland.

The protein resides in the secreted. Alpha toxins bind voltage-independently at site-3 of sodium channels (Nav) and inhibit the inactivation of the activated channels, thereby blocking neuronal transmission. This toxin is active only on insects. The chain is Alpha-insect toxin Bot14 from Buthus occitanus tunetanus (Common European scorpion).